The sequence spans 1252 residues: Fanconi anemia group J protein homolog (1252 aa).

The region spanning 11–452 (GGVKIMFPCK…KDHEQLRAMC (442 aa)) is the Helicase ATP-binding domain. The Nuclear localization signal signature appears at 164-181 (RKRIRPLETEQQVRKRHC). 191–198 (ALEVYNQR) is a binding site for ATP. Residues cysteine 292, cysteine 308, cysteine 320, and cysteine 360 each contribute to the [4Fe-4S] cluster site. The DEAH box motif lies at 403-406 (DEAH). Disordered regions lie at residues 919–1008 (SKEP…DRTN) and 1212–1252 (TNGE…STST). 2 stretches are compositionally biased toward polar residues: residues 920–930 (KEPSSASQQEA) and 952–969 (HLTT…NQPG). A compositionally biased stretch (basic and acidic residues) spans 989–1008 (MDSTPRRPANKTEKKSDRTN). Residues 1215 to 1224 (EEAEQVESQE) show a composition bias toward acidic residues. Over residues 1228 to 1239 (KKRKISLSRSRN) the composition is skewed to basic residues.

It belongs to the DEAD box helicase family. DEAH subfamily. The cofactor is [4Fe-4S] cluster.

It is found in the nucleus. It catalyses the reaction Couples ATP hydrolysis with the unwinding of duplex DNA at the replication fork by translocating in the 5'-3' direction. This creates two antiparallel DNA single strands (ssDNA). The leading ssDNA polymer is the template for DNA polymerase III holoenzyme which synthesizes a continuous strand.. The enzyme catalyses ATP + H2O = ADP + phosphate + H(+). DNA-dependent helicase and 5' to 3' DNA helicase required for the maintenance of chromosomal stability. Involved in the repair of DNA double-strand breaks by homologous recombination. Involved in the repair of abasic sites at replication forks by promoting the degradation of DNA-protein cross-links: acts by catalyzing unfolding of HMCES DNA-protein cross-link via its helicase activity, exposing the underlying DNA and enabling cleavage of the DNA-protein adduct by the SPRTN metalloprotease. This is Fanconi anemia group J protein homolog (BRIP1) from Gallus gallus (Chicken).